Reading from the N-terminus, the 449-residue chain is UDP-N-acetylmuramate--L-alanine ligase (449 aa).

Residue 121-127 coordinates ATP; sequence GAHGKSS.

Belongs to the MurCDEF family.

It is found in the cytoplasm. The catalysed reaction is UDP-N-acetyl-alpha-D-muramate + L-alanine + ATP = UDP-N-acetyl-alpha-D-muramoyl-L-alanine + ADP + phosphate + H(+). Its pathway is cell wall biogenesis; peptidoglycan biosynthesis. Cell wall formation. The sequence is that of UDP-N-acetylmuramate--L-alanine ligase from Helicobacter pylori (strain ATCC 700392 / 26695) (Campylobacter pylori).